A 542-amino-acid chain; its full sequence is CTP synthase (542 aa).

Positions 1–266 (MATNYIFVTG…DDFICQRFHL (266 aa)) are amidoligase domain. Serine 14 serves as a coordination point for CTP. UTP is bound at residue serine 14. ATP-binding positions include 15 to 20 (SLGKGI) and aspartate 72. Positions 72 and 140 each coordinate Mg(2+). CTP contacts are provided by residues 147–149 (DIE), 187–192 (KTKPTQ), and lysine 223. UTP is bound by residues 187–192 (KTKPTQ) and lysine 223. 239–241 (KDV) provides a ligand contact to ATP. The 252-residue stretch at 291–542 (VIGMVGKYTE…VKAAKDNQKK (252 aa)) folds into the Glutamine amidotransferase type-1 domain. Position 352 (glycine 352) interacts with L-glutamine. The active-site Nucleophile; for glutamine hydrolysis is the cysteine 379. Residues 380–383 (LGMQ), glutamate 403, and arginine 470 each bind L-glutamine. Residues histidine 515 and glutamate 517 contribute to the active site.

The protein belongs to the CTP synthase family. Homotetramer.

It carries out the reaction UTP + L-glutamine + ATP + H2O = CTP + L-glutamate + ADP + phosphate + 2 H(+). It catalyses the reaction L-glutamine + H2O = L-glutamate + NH4(+). The catalysed reaction is UTP + NH4(+) + ATP = CTP + ADP + phosphate + 2 H(+). The protein operates within pyrimidine metabolism; CTP biosynthesis via de novo pathway; CTP from UDP: step 2/2. Its activity is regulated as follows. Allosterically activated by GTP, when glutamine is the substrate; GTP has no effect on the reaction when ammonia is the substrate. The allosteric effector GTP functions by stabilizing the protein conformation that binds the tetrahedral intermediate(s) formed during glutamine hydrolysis. Inhibited by the product CTP, via allosteric rather than competitive inhibition. Its function is as follows. Catalyzes the ATP-dependent amination of UTP to CTP with either L-glutamine or ammonia as the source of nitrogen. Regulates intracellular CTP levels through interactions with the four ribonucleotide triphosphates. This Pasteurella multocida (strain Pm70) protein is CTP synthase.